A 463-amino-acid chain; its full sequence is Argininosuccinate lyase (463 aa).

This sequence belongs to the lyase 1 family. Argininosuccinate lyase subfamily.

Its subcellular location is the cytoplasm. The enzyme catalyses 2-(N(omega)-L-arginino)succinate = fumarate + L-arginine. Its pathway is amino-acid biosynthesis; L-arginine biosynthesis; L-arginine from L-ornithine and carbamoyl phosphate: step 3/3. This Prochlorococcus marinus (strain NATL2A) protein is Argininosuccinate lyase.